The primary structure comprises 150 residues: Large ribosomal subunit protein uL15 (150 aa).

Residues 1-60 are disordered; it reads MKLSDLRPNPGANKRRKRVGRGPGSGHGKTATRGHKGQKSRSGGLKDPRRFEGGRSTTLM. A compositionally biased stretch (basic residues) spans 30–39; it reads TATRGHKGQK. A compositionally biased stretch (basic and acidic residues) spans 44 to 53; that stretch reads GLKDPRRFEG.

It belongs to the universal ribosomal protein uL15 family. Part of the 50S ribosomal subunit.

Binds to the 23S rRNA. In Thermus thermophilus (strain ATCC BAA-163 / DSM 7039 / HB27), this protein is Large ribosomal subunit protein uL15.